A 37-amino-acid chain; its full sequence is Mastoparan-VT (37 aa).

A propeptide spanning residues 1–22 (EALADPIADPVAGPNPEADPEA) is cleaved from the precursor. AXPX repeat units lie at residues 4–7 (ADPI), 8–11 (ADPV), 12–15 (AGPN), and 18–21 (ADPE). Position 36 is a leucine amide (leucine 36).

The protein belongs to the MCD family. Mastoparan subfamily. In terms of tissue distribution, expressed by the venom gland.

It localises to the secreted. The protein resides in the target cell membrane. Antimicrobial peptide with potent activity against both Gram-positive (S.aureus MIC=50 ug/ml, and B.subtilis MIC=25 ug/ml) and Gram-negative bacteria (P.aeruginosa MIC=25 ug/ml, E.coli MIC=3-50 ug/ml, K.pneumoniae MIC=25 ug/ml). Exhibits little hemolytic activity on human erythrocytes. The sequence is that of Mastoparan-VT from Vespa tropica (Greater banded hornet).